We begin with the raw amino-acid sequence, 92 residues long: UPF0473 protein BC_4380 (92 aa).

This sequence belongs to the UPF0473 family.

In Bacillus cereus (strain ATCC 14579 / DSM 31 / CCUG 7414 / JCM 2152 / NBRC 15305 / NCIMB 9373 / NCTC 2599 / NRRL B-3711), this protein is UPF0473 protein BC_4380.